Consider the following 368-residue polypeptide: Ankyrin repeat domain-containing protein 40 (368 aa).

At Met-1 the chain carries N-acetylmethionine. ANK repeat units follow at residues 9–38 and 43–72; these read EQQERLREAAALGDIREVQKLVESGVDVNS and NGWTCLHWACKRNHGQVVSYLLKSGADKEI. 3 disordered regions span residues 93–115, 139–176, and 196–238; these read MGVEEEDDDDDDDDNLPQLKKES, DSAQMQNGGPSTPPASPPADGSPPLLPPGEPPLLGTFP, and ILRT…NGTY. A compositionally biased stretch (acidic residues) spans 95-107; that stretch reads VEEEDDDDDDDDN. Pro residues predominate over residues 149–169; sequence STPPASPPADGSPPLLPPGEP. Residues 212–224 are compositionally biased toward polar residues; sequence PVSQSRSLFSSVP.

The chain is Ankyrin repeat domain-containing protein 40 (ANKRD40) from Homo sapiens (Human).